A 291-amino-acid chain; its full sequence is N-acetylmannosamine kinase (291 aa).

ATP contacts are provided by residues 5–12 (AIDIGGTK) and 132–139 (GVGGGVVS). Residues histidine 156, cysteine 166, cysteine 168, and cysteine 173 each contribute to the Zn(2+) site.

This sequence belongs to the ROK (NagC/XylR) family. NanK subfamily. Homodimer.

It carries out the reaction an N-acyl-D-mannosamine + ATP = an N-acyl-D-mannosamine 6-phosphate + ADP + H(+). The protein operates within amino-sugar metabolism; N-acetylneuraminate degradation; D-fructose 6-phosphate from N-acetylneuraminate: step 2/5. In terms of biological role, catalyzes the phosphorylation of N-acetylmannosamine (ManNAc) to ManNAc-6-P. In Escherichia coli O1:K1 / APEC, this protein is N-acetylmannosamine kinase.